The following is a 107-amino-acid chain: Nucleoid-associated protein CE0210 (107 aa).

The protein belongs to the YbaB/EbfC family. Homodimer.

The protein localises to the cytoplasm. It is found in the nucleoid. Its function is as follows. Binds to DNA and alters its conformation. May be involved in regulation of gene expression, nucleoid organization and DNA protection. In Corynebacterium efficiens (strain DSM 44549 / YS-314 / AJ 12310 / JCM 11189 / NBRC 100395), this protein is Nucleoid-associated protein CE0210.